We begin with the raw amino-acid sequence, 704 residues long: MYNIPDNVKGAVEFDPWLKPFADVLSERRYLADKWLYDITHATPDGSYQSLSKFARDSYKSYGLHANPETKEITYKEWAPNAERAFLVGDFNNWDTTSHELKNKDEFGNFTITLHPLPNGDFAIPHDSKIKVMFILPDGSKIFRLPAWITRATQPSKETSKQFGPAYEGRFWNPENPYKFVHPRPKFSESVDSLRIYEAHVGISSPEPKITTYKEFTEKVLPRIKYLGYDAIQLMAIMEHAYYASFGYQVTNFFAASSRFGTPEELKELIDTAHSMGILVLLDVVHSHASKNVEDGLNMFDGSDHQYFHSISSGRGEHPLWDSRLFNYGKFEVQRFLLANLAFYVDVYQFDGFRFDGVTSMLYVHHGVGAGGSFSGDYNEYLSRDRSFVDHEALAYLMLANDLVHEMLPNLAVTVAEDVSGYPTLCLPRSIGGTGFDYRLAMALPDMWIKLIKEKKDDEWEMGSIVYTLTNRRYGEKVVAYCESHDQALVGDKTLAFWLMDAAMYTDMTVLKEPSIVIDRGIALHKMIRLITHSLGGEAYLNFEGNEFGHPEWLDFPNVNNGDSYKYARRQFNLADDPLLRYQNLNEFDRSMQLCEKRHKWLNTKQAYVSLKHEGDKMIVFERNNLLFIFNFHPTNSYSDYRVGVEKAGTYHIVLNSDRAEFGGHNRINESSEFFTTDLEWNNRKNFLQVYIPSRVALVLALKE.

(1,4-alpha-D-glucosyl)n contacts are provided by Trp94 and Lys131. The residue at position 190 (Ser190) is a Phosphoserine. The active-site Nucleophile is Asp356. Glu417 acts as the Proton donor in catalysis.

Belongs to the glycosyl hydrolase 13 family. GlgB subfamily.

Its subcellular location is the cytoplasm. It catalyses the reaction Transfers a segment of a (1-&gt;4)-alpha-D-glucan chain to a primary hydroxy group in a similar glucan chain.. Its pathway is glycan biosynthesis; glycogen biosynthesis. Its function is as follows. Glycogen-branching enzyme participates in the glycogen biosynthetic process along with glycogenin and glycogen synthase. Generates alpha-1,6-glucosidic branches from alpha-1,4-linked glucose chains, to increase solubility of the glycogen polymer. The polypeptide is 1,4-alpha-glucan-branching enzyme (GLC3) (Saccharomyces cerevisiae (strain ATCC 204508 / S288c) (Baker's yeast)).